The chain runs to 241 residues: Ion-translocating oxidoreductase complex subunit E (241 aa).

6 consecutive transmembrane segments (helical) span residues 22–42, 69–89, 91–111, 124–144, 157–177, and 182–202; these read LLGL…IGLG, IPIY…VIKA, AFNL…NCIV, VLVS…TMFL, LFFG…IEVL, and VFLL…VLAG.

It belongs to the NqrDE/RnfAE family. The complex is composed of six subunits: RnfA, RnfB, RnfC, RnfD, RnfE and RnfG.

Its subcellular location is the cell inner membrane. Its function is as follows. Part of a membrane-bound complex that couples electron transfer with translocation of ions across the membrane. The sequence is that of Ion-translocating oxidoreductase complex subunit E from Buchnera aphidicola subsp. Baizongia pistaciae (strain Bp).